Here is a 149-residue protein sequence, read N- to C-terminus: SsrA-binding protein (149 aa).

The tract at residues 121-149 (GKKQHDKRAAEKDREWQREKQRLVRSAQH) is disordered. Residues 127–142 (KRAAEKDREWQREKQR) show a composition bias toward basic and acidic residues.

This sequence belongs to the SmpB family.

It is found in the cytoplasm. Required for rescue of stalled ribosomes mediated by trans-translation. Binds to transfer-messenger RNA (tmRNA), required for stable association of tmRNA with ribosomes. tmRNA and SmpB together mimic tRNA shape, replacing the anticodon stem-loop with SmpB. tmRNA is encoded by the ssrA gene; the 2 termini fold to resemble tRNA(Ala) and it encodes a 'tag peptide', a short internal open reading frame. During trans-translation Ala-aminoacylated tmRNA acts like a tRNA, entering the A-site of stalled ribosomes, displacing the stalled mRNA. The ribosome then switches to translate the ORF on the tmRNA; the nascent peptide is terminated with the 'tag peptide' encoded by the tmRNA and targeted for degradation. The ribosome is freed to recommence translation, which seems to be the essential function of trans-translation. This is SsrA-binding protein from Thiobacillus denitrificans (strain ATCC 25259 / T1).